Consider the following 225-residue polypeptide: Phosphoribosylformylglycinamidine synthase subunit PurQ (225 aa).

Residues 5-225 (RFGIVVFPGS…WQSIVQSLAG (221 aa)) enclose the Glutamine amidotransferase type-1 domain. Cys-89 acts as the Nucleophile in catalysis. Catalysis depends on residues His-198 and Glu-200.

In terms of assembly, part of the FGAM synthase complex composed of 1 PurL, 1 PurQ and 2 PurS subunits.

The protein resides in the cytoplasm. It carries out the reaction N(2)-formyl-N(1)-(5-phospho-beta-D-ribosyl)glycinamide + L-glutamine + ATP + H2O = 2-formamido-N(1)-(5-O-phospho-beta-D-ribosyl)acetamidine + L-glutamate + ADP + phosphate + H(+). The catalysed reaction is L-glutamine + H2O = L-glutamate + NH4(+). It participates in purine metabolism; IMP biosynthesis via de novo pathway; 5-amino-1-(5-phospho-D-ribosyl)imidazole from N(2)-formyl-N(1)-(5-phospho-D-ribosyl)glycinamide: step 1/2. In terms of biological role, part of the phosphoribosylformylglycinamidine synthase complex involved in the purines biosynthetic pathway. Catalyzes the ATP-dependent conversion of formylglycinamide ribonucleotide (FGAR) and glutamine to yield formylglycinamidine ribonucleotide (FGAM) and glutamate. The FGAM synthase complex is composed of three subunits. PurQ produces an ammonia molecule by converting glutamine to glutamate. PurL transfers the ammonia molecule to FGAR to form FGAM in an ATP-dependent manner. PurS interacts with PurQ and PurL and is thought to assist in the transfer of the ammonia molecule from PurQ to PurL. The sequence is that of Phosphoribosylformylglycinamidine synthase subunit PurQ from Synechococcus sp. (strain JA-3-3Ab) (Cyanobacteria bacterium Yellowstone A-Prime).